The sequence spans 178 residues: Ribosome maturation factor RimM (178 aa).

The region spanning 98 to 178 is the PRC barrel domain; the sequence is DGEYYWNQLE…RILVDWDPEF (81 aa).

It belongs to the RimM family. In terms of assembly, binds ribosomal protein uS19.

It is found in the cytoplasm. In terms of biological role, an accessory protein needed during the final step in the assembly of 30S ribosomal subunit, possibly for assembly of the head region. Essential for efficient processing of 16S rRNA. May be needed both before and after RbfA during the maturation of 16S rRNA. It has affinity for free ribosomal 30S subunits but not for 70S ribosomes. The sequence is that of Ribosome maturation factor RimM from Cellvibrio japonicus (strain Ueda107) (Pseudomonas fluorescens subsp. cellulosa).